The sequence spans 681 residues: Probable glutamate carboxypeptidase LAMP1 (681 aa).

The Cytoplasmic portion of the chain corresponds to 1–6 (MSKSKS). A helical; Signal-anchor for type II membrane protein membrane pass occupies residues 7-24 (LAFVIAALSYSFFSLFSS). Topologically, residues 25-681 (PPKSHYHELF…ASLVLKGELI (657 aa)) are extracellular. Residues asparagine 42, asparagine 140, asparagine 166, and asparagine 299 are each glycosylated (N-linked (GlcNAc...) asparagine). Residues 241 to 527 (SVDGCERLSD…SVLGLVALRL (287 aa)) are catalytic. Residues histidine 333 and aspartate 343 each contribute to the Zn(2+) site. Glutamate 380 serves as the catalytic Nucleophile. Zn(2+) is bound by residues glutamate 381 and aspartate 409. Asparagine 441 carries an N-linked (GlcNAc...) asparagine glycan. Histidine 493 lines the Zn(2+) pocket. The N-linked (GlcNAc...) asparagine glycan is linked to asparagine 536.

The protein belongs to the peptidase M28 family. M28B subfamily. Zn(2+) serves as cofactor.

The protein localises to the endoplasmic reticulum membrane. It catalyses the reaction Release of an unsubstituted, C-terminal glutamyl residue, typically from Ac-Asp-Glu or folylpoly-gamma-glutamates.. Its function is as follows. Acts in association with AMP1 to suppress ectopic stem cell niche formation in the shoot apical meristem (SAM) independently of cytokinin signaling pathway. This chain is Probable glutamate carboxypeptidase LAMP1, found in Arabidopsis thaliana (Mouse-ear cress).